Reading from the N-terminus, the 112-residue chain is 2Fe-2S ferredoxin (112 aa).

Residues 5-107 form the 2Fe-2S ferredoxin-type domain; that stretch reads IKVTFIVNDG…GIKVRLPSAT (103 aa). The [2Fe-2S] cluster site is built by Cys42, Cys48, Cys51, and Cys88.

The protein belongs to the adrenodoxin/putidaredoxin family. It depends on [2Fe-2S] cluster as a cofactor.

Its function is as follows. Ferredoxin are iron-sulfur proteins that transfer electrons in a wide variety of metabolic reactions. The sequence is that of 2Fe-2S ferredoxin (fdxB) from Rickettsia felis (strain ATCC VR-1525 / URRWXCal2) (Rickettsia azadi).